We begin with the raw amino-acid sequence, 298 residues long: Sulfofructose kinase (298 aa).

The 6-deoxy-6-sulfo-D-fructose site is built by Asp13, Lys27, Gly39, Ser95, and Arg138. Positions 212, 214, 217, and 243 each coordinate ATP. Asp244 lines the 6-deoxy-6-sulfo-D-fructose pocket.

The protein belongs to the carbohydrate kinase PfkB family. Homodimer.

The enzyme catalyses 6-deoxy-6-sulfo-D-fructose + ATP = 6-deoxy-6-sulfo-D-fructose 1-phosphate + ADP + H(+). With respect to regulation, strongly inhibited by ADP. Activated by sulfoquinovose (SQ), sulfolactaldehyde (SLA) and dihydroxyacetone phosphate (DHAP) (through effects on KM) and by fructose 6-phosphate (F6P), fructose bisphosphate (FBP), phosphoenolpyruvate (PEP) and citrate (through effects on kcat/KM). Functionally, phosphorylates 6-deoxy-6-sulfo-D-fructose (SF) to 6-deoxy-6-sulfo-D-fructose 1-phosphate (SFP). Cannot phosphorylate fructose 6-phosphate. The protein is Sulfofructose kinase (yihV) of Escherichia coli (strain K12).